The following is a 754-amino-acid chain: Phosphoribosylformylglycinamidine synthase subunit PurL (754 aa).

Residue histidine 54 is part of the active site. Positions 57 and 101 each coordinate ATP. Position 103 (glutamate 103) interacts with Mg(2+). Substrate contacts are provided by residues 104–107 (SHNH) and arginine 126. The active-site Proton acceptor is the histidine 105. Aspartate 127 is a Mg(2+) binding site. Glutamine 252 is a substrate binding site. Aspartate 280 lines the Mg(2+) pocket. 324-326 (ESQ) is a binding site for substrate. The segment at 386–412 (PVYQRPVSRPESQEALNADSSKGLPRP) is disordered. Positions 512 and 549 each coordinate ATP. Residue asparagine 550 coordinates Mg(2+). Serine 552 is a binding site for substrate.

It belongs to the FGAMS family. As to quaternary structure, monomer. Part of the FGAM synthase complex composed of 1 PurL, 1 PurQ and 2 PurS subunits.

It localises to the cytoplasm. The enzyme catalyses N(2)-formyl-N(1)-(5-phospho-beta-D-ribosyl)glycinamide + L-glutamine + ATP + H2O = 2-formamido-N(1)-(5-O-phospho-beta-D-ribosyl)acetamidine + L-glutamate + ADP + phosphate + H(+). It participates in purine metabolism; IMP biosynthesis via de novo pathway; 5-amino-1-(5-phospho-D-ribosyl)imidazole from N(2)-formyl-N(1)-(5-phospho-D-ribosyl)glycinamide: step 1/2. Functionally, part of the phosphoribosylformylglycinamidine synthase complex involved in the purines biosynthetic pathway. Catalyzes the ATP-dependent conversion of formylglycinamide ribonucleotide (FGAR) and glutamine to yield formylglycinamidine ribonucleotide (FGAM) and glutamate. The FGAM synthase complex is composed of three subunits. PurQ produces an ammonia molecule by converting glutamine to glutamate. PurL transfers the ammonia molecule to FGAR to form FGAM in an ATP-dependent manner. PurS interacts with PurQ and PurL and is thought to assist in the transfer of the ammonia molecule from PurQ to PurL. The polypeptide is Phosphoribosylformylglycinamidine synthase subunit PurL (Mycobacterium leprae (strain Br4923)).